The following is a 760-amino-acid chain: Golgin subfamily A member 5 (760 aa).

Topologically, residues 1-727 (MSWFVDLAGK…IFLRRYPMAR (727 aa)) are cytoplasmic. Residues 95-111 (VSSTTPLGSSSKASSNF) show a composition bias toward polar residues. 3 disordered regions span residues 95–114 (VSST…FVRP), 126–216 (DFLN…SQAD), and 432–456 (TEEK…EYTK). The span at 135–146 (QSEKKEVRRETV) shows a compositional bias: basic and acidic residues. Polar residues predominate over residues 148–166 (KAFSPTGVSAQSQMPTVSL). Low complexity predominate over residues 174–201 (PSVTPTPSSTQGLSRNSSLGSLSSSSHS). The stretch at 249–668 (QGQEHVISNL…LQGGQNSASH (420 aa)) forms a coiled coil. Polar residues predominate over residues 441–450 (LQQQAKSSRS). The chain crosses the membrane as a helical; Anchor for type IV membrane protein span at residues 728–748 (VFVIIYMALLHLWVMIVLLTY). The Extracellular segment spans residues 749-760 (TPEMHHSHPDGR).

The protein resides in the golgi apparatus membrane. Its function is as follows. Involved in maintaining Golgi structure. Stimulates the formation of Golgi stacks and ribbons. Involved in intra-Golgi retrograde transport. The protein is Golgin subfamily A member 5 (golga5) of Danio rerio (Zebrafish).